The chain runs to 107 residues: Ig kappa chain V-VI region TEPC 601/TEPC 191 (107 aa).

Positions 1–23 (EIVLTQSPAITAASLGQKVTITC) are framework-1. An intrachain disulfide couples Cys-23 to Cys-87. The segment at 24 to 33 (SASSSVSYMH) is complementarity-determining-1. The segment at 34 to 48 (WYQQKSGTSPKPWIY) is framework-2. The tract at residues 49 to 55 (EISKLAS) is complementarity-determining-2. Positions 56-87 (GVPARFSGSGSGTSYSLTISSMEAEDAAIYYC) are framework-3. The tract at residues 88-96 (QQWNYPLIT) is complementarity-determining-3. Positions 97 to 106 (FGAGTKLELK) are framework-4.

The protein is Ig kappa chain V-VI region TEPC 601/TEPC 191 of Mus musculus (Mouse).